A 302-amino-acid polypeptide reads, in one-letter code: Methionyl-tRNA formyltransferase (302 aa).

106–109 contacts (6S)-5,6,7,8-tetrahydrofolate; it reads SVLP.

The protein belongs to the Fmt family.

It carries out the reaction L-methionyl-tRNA(fMet) + (6R)-10-formyltetrahydrofolate = N-formyl-L-methionyl-tRNA(fMet) + (6S)-5,6,7,8-tetrahydrofolate + H(+). Functionally, attaches a formyl group to the free amino group of methionyl-tRNA(fMet). The formyl group appears to play a dual role in the initiator identity of N-formylmethionyl-tRNA by promoting its recognition by IF2 and preventing the misappropriation of this tRNA by the elongation apparatus. The protein is Methionyl-tRNA formyltransferase of Hydrogenobaculum sp. (strain Y04AAS1).